Consider the following 209-residue polypeptide: MKKAILGKKLGMTQIFNENGKVIPVTVIEAGPCTVIQKKTVEKDGYEAIQVAFGDIREKLRNKPVKGHFAKAGVSVKRHIKEFKLEDSNSLEIGQEIKADVFEAGERVDISGVSKGKGFQGTIRRWNAHRGPMSHGSKFHRAVGSMGASSDPSRTFKNKRMPGHMGNVNTTVLNLEVVRIIPEKNLILIKGGVPGPNKGLVQIRNTVKA.

Residues 141-163 (RAVGSMGASSDPSRTFKNKRMPG) are disordered.

This sequence belongs to the universal ribosomal protein uL3 family. In terms of assembly, part of the 50S ribosomal subunit. Forms a cluster with proteins L14 and L19.

Its function is as follows. One of the primary rRNA binding proteins, it binds directly near the 3'-end of the 23S rRNA, where it nucleates assembly of the 50S subunit. The chain is Large ribosomal subunit protein uL3 from Clostridium botulinum (strain Langeland / NCTC 10281 / Type F).